Consider the following 492-residue polypeptide: Cysteine--tRNA ligase (492 aa).

Cys29 lines the Zn(2+) pocket. The 'HIGH' region signature appears at 31–41; the sequence is PTVYDYAHIGN. Cys222, His247, and Glu251 together coordinate Zn(2+). The 'KMSKS' region signature appears at 279-283; sequence KMSKS. Lys282 contributes to the ATP binding site.

Belongs to the class-I aminoacyl-tRNA synthetase family. Monomer. The cofactor is Zn(2+).

The protein localises to the cytoplasm. The catalysed reaction is tRNA(Cys) + L-cysteine + ATP = L-cysteinyl-tRNA(Cys) + AMP + diphosphate. This Treponema denticola (strain ATCC 35405 / DSM 14222 / CIP 103919 / JCM 8153 / KCTC 15104) protein is Cysteine--tRNA ligase.